Reading from the N-terminus, the 433-residue chain is Ribosomal protein uS12 methylthiotransferase RimO (433 aa).

Residues 6–122 (QSIFLLSLGC…IISVLGGSYR (117 aa)) form the MTTase N-terminal domain. [4Fe-4S] cluster is bound by residues Cys15, Cys51, Cys85, Cys146, Cys150, and Cys153. In terms of domain architecture, Radical SAM core spans 132–362 (LTPPHYAWLK…MELQESIAAE (231 aa)). Residues 365-432 (RELEGRVMKV…AYELHGRVND (68 aa)) enclose the TRAM domain.

The protein belongs to the methylthiotransferase family. RimO subfamily. It depends on [4Fe-4S] cluster as a cofactor.

It is found in the cytoplasm. It carries out the reaction L-aspartate(89)-[ribosomal protein uS12]-hydrogen + (sulfur carrier)-SH + AH2 + 2 S-adenosyl-L-methionine = 3-methylsulfanyl-L-aspartate(89)-[ribosomal protein uS12]-hydrogen + (sulfur carrier)-H + 5'-deoxyadenosine + L-methionine + A + S-adenosyl-L-homocysteine + 2 H(+). Functionally, catalyzes the methylthiolation of an aspartic acid residue of ribosomal protein uS12. This chain is Ribosomal protein uS12 methylthiotransferase RimO, found in Prosthecochloris aestuarii (strain DSM 271 / SK 413).